Here is a 188-residue protein sequence, read N- to C-terminus: Viral FLICE protein (188 aa).

DED domains are found at residues 2–74 (ATYE…DLLH) and 93–169 (PYQL…QVQT).

Interacts with host RIPK1, TRAF2, MAP3K14, IKBKB, and IKBKG. Interacts with host CADM1; this interaction is essential for chronic NF-kappa-B activation.

Plays a role in the modulation of host signaling pathways by acting as an activator of both the classic and the alternative NF-kappa-B pathways. Thereby, initiates an important range of cellular processes to promote cell survival, proliferation and protection from apoptosis. This chain is Viral FLICE protein (ORF71), found in Human herpesvirus 8 type P (isolate GK18) (HHV-8).